The following is a 510-amino-acid chain: NAD(P)H-quinone oxidoreductase subunit 2 B, chloroplastic (510 aa).

14 helical membrane passes run 24 to 44 (LLLFHGSFIFPECILIFGLIL), 59 to 79 (WFYFISSTSLVISITALLFRW), 99 to 119 (IFQFLILLCSTLCIPLSVEYI), 124 to 144 (MAITEFLLFVLTATLGGMFLC), 149 to 169 (LITIFVALECFSLCSYLLSGY), 184 to 204 (LLMGGASSSILVYGFSWLYGL), 229 to 249 (ISIALIFITVGLGFKLSLAPF), 261 to 281 (PTPVVAFLSVTSKVAALALAT), 295 to 315 (WHLLLEILAILSMILGNLLAI), 323 to 343 (MLAYSSIGQIGYVIIGIIVGD), 354 to 374 (YMLFYISMNLGTFACIVLFGL), 395 to 415 (ALSLALCLLSLGGLPPLAGFF), 418 to 438 (LYLFWCGWQAGLYFLVSIGLL), and 484 to 504 (MTVCVIASTILGISMNPILAI).

Belongs to the complex I subunit 2 family. As to quaternary structure, NDH is composed of at least 16 different subunits, 5 of which are encoded in the nucleus.

The protein localises to the plastid. Its subcellular location is the chloroplast thylakoid membrane. The catalysed reaction is a plastoquinone + NADH + (n+1) H(+)(in) = a plastoquinol + NAD(+) + n H(+)(out). The enzyme catalyses a plastoquinone + NADPH + (n+1) H(+)(in) = a plastoquinol + NADP(+) + n H(+)(out). Functionally, NDH shuttles electrons from NAD(P)H:plastoquinone, via FMN and iron-sulfur (Fe-S) centers, to quinones in the photosynthetic chain and possibly in a chloroplast respiratory chain. The immediate electron acceptor for the enzyme in this species is believed to be plastoquinone. Couples the redox reaction to proton translocation, and thus conserves the redox energy in a proton gradient. In Zea mays (Maize), this protein is NAD(P)H-quinone oxidoreductase subunit 2 B, chloroplastic.